A 232-amino-acid polypeptide reads, in one-letter code: Octanoyltransferase (232 aa).

In terms of domain architecture, BPL/LPL catalytic spans 44 to 219; sequence EHTGDELWVV…QLARQFGLVL (176 aa). Substrate contacts are provided by residues 83-90, 150-152, and 163-165; these read RGGQVTYH, ALG, and GLS. Cysteine 181 functions as the Acyl-thioester intermediate in the catalytic mechanism.

It belongs to the LipB family.

The protein localises to the cytoplasm. The enzyme catalyses octanoyl-[ACP] + L-lysyl-[protein] = N(6)-octanoyl-L-lysyl-[protein] + holo-[ACP] + H(+). It participates in protein modification; protein lipoylation via endogenous pathway; protein N(6)-(lipoyl)lysine from octanoyl-[acyl-carrier-protein]: step 1/2. Functionally, catalyzes the transfer of endogenously produced octanoic acid from octanoyl-acyl-carrier-protein onto the lipoyl domains of lipoate-dependent enzymes. Lipoyl-ACP can also act as a substrate although octanoyl-ACP is likely to be the physiological substrate. The sequence is that of Octanoyltransferase from Xanthomonas campestris pv. campestris (strain 8004).